The primary structure comprises 37 residues: Cytochrome b6-f complex subunit 5 (37 aa).

The helical transmembrane segment at 5–25 (LLFGIVLGLIPVTLTGLFVAA) threads the bilayer.

It belongs to the PetG family. As to quaternary structure, the 4 large subunits of the cytochrome b6-f complex are cytochrome b6, subunit IV (17 kDa polypeptide, PetD), cytochrome f and the Rieske protein, while the 4 small subunits are PetG, PetL, PetM and PetN. The complex functions as a dimer.

The protein localises to the plastid. The protein resides in the chloroplast thylakoid membrane. Functionally, component of the cytochrome b6-f complex, which mediates electron transfer between photosystem II (PSII) and photosystem I (PSI), cyclic electron flow around PSI, and state transitions. PetG is required for either the stability or assembly of the cytochrome b6-f complex. The polypeptide is Cytochrome b6-f complex subunit 5 (Guillardia theta (Cryptophyte)).